The chain runs to 235 residues: Glutathione S-transferase L3 (235 aa).

Residues glycine 27–serine 108 form the GST N-terminal domain. Residues cysteine 37–proline 38, asparagine 65–arginine 66, lysine 79–valine 80, and glutamate 92–serine 93 contribute to the glutathione site. The 145-residue stretch at asparagine 86 to phenylalanine 230 folds into the GST C-terminal domain.

This sequence belongs to the GST superfamily. Lambda family.

It localises to the cytoplasm. Its subcellular location is the cytosol. The enzyme catalyses RX + glutathione = an S-substituted glutathione + a halide anion + H(+). In terms of biological role, catalyzes the glutathione-dependent reduction of S-glutathionylquercetin to quercetin. The polypeptide is Glutathione S-transferase L3 (GSTL3) (Arabidopsis thaliana (Mouse-ear cress)).